A 334-amino-acid polypeptide reads, in one-letter code: Cytoskeleton protein RodZ (334 aa).

Topologically, residues 1-111 (MNTEATHDQN…LGKRRKKRDG (111 aa)) are cytoplasmic. An HTH cro/C1-type domain is found at 19–71 (LRNAREQLGLSQQAVAERLCLKVSTVRDIEEDKAPSDLASTFLRGYIRSYARL). The segment at residues 30–49 (QQAVAERLCLKVSTVRDIEE) is a DNA-binding region (H-T-H motif). The chain crosses the membrane as a helical; Signal-anchor for type II membrane protein span at residues 112 to 132 (WLMSFTWLVLFVVVGLTGAWW). The Periplasmic segment spans residues 133-334 (WQNHKAQQEE…TLNAEPTPAQ (202 aa)). Disordered stretches follow at residues 155–207 (NADK…ATQN) and 221–241 (ATSA…SQAG). The span at 176–207 (TTPAQTAPAPATPVDSTAATQTPAATATATQN) shows a compositional bias: low complexity.

It belongs to the RodZ family.

The protein localises to the cell inner membrane. In terms of biological role, cytoskeletal protein that is involved in cell-shape control through regulation of the length of the long axis. The chain is Cytoskeleton protein RodZ from Salmonella schwarzengrund (strain CVM19633).